The primary structure comprises 405 residues: GTPase Obg (405 aa).

Positions 1 to 159 (MRFIDEAVVT…KVLKFELKVV (159 aa)) constitute an Obg domain. Residues 160–333 (ADVGLIGLPN…IKYHLMNEIE (174 aa)) form the OBG-type G domain. GTP is bound by residues 166–173 (GLPNAGKS), 191–195 (FTTLV), 213–216 (DIPG), 283–286 (NKID), and 314–316 (ATL). Residues Ser173 and Thr193 each contribute to the Mg(2+) site. Over residues 371 to 382 (YRAARKAAREGT) the composition is skewed to basic and acidic residues. Residues 371 to 405 (YRAARKAAREGTDLSDDDFDDSDDDDDGVEVVYAP) are disordered. The segment covering 383–399 (DLSDDDFDDSDDDDDGV) has biased composition (acidic residues).

It belongs to the TRAFAC class OBG-HflX-like GTPase superfamily. OBG GTPase family. In terms of assembly, monomer. The cofactor is Mg(2+).

It is found in the cytoplasm. Functionally, an essential GTPase which binds GTP, GDP and possibly (p)ppGpp with moderate affinity, with high nucleotide exchange rates and a fairly low GTP hydrolysis rate. Plays a role in control of the cell cycle, stress response, ribosome biogenesis and in those bacteria that undergo differentiation, in morphogenesis control. This chain is GTPase Obg, found in Psychrobacter cryohalolentis (strain ATCC BAA-1226 / DSM 17306 / VKM B-2378 / K5).